A 149-amino-acid chain; its full sequence is Ribosomal RNA large subunit methyltransferase H (149 aa).

S-adenosyl-L-methionine contacts are provided by residues leucine 71, glycine 98, and 117 to 122 (LSKMTL).

It belongs to the RNA methyltransferase RlmH family. Homodimer.

It is found in the cytoplasm. It carries out the reaction pseudouridine(1915) in 23S rRNA + S-adenosyl-L-methionine = N(3)-methylpseudouridine(1915) in 23S rRNA + S-adenosyl-L-homocysteine + H(+). In terms of biological role, specifically methylates the pseudouridine at position 1915 (m3Psi1915) in 23S rRNA. This Campylobacter fetus subsp. fetus (strain 82-40) protein is Ribosomal RNA large subunit methyltransferase H.